The primary structure comprises 246 residues: 3-oxoacyl-[acyl-carrier-protein] reductase FabG (246 aa).

NADP(+) contacts are provided by residues 11-14 (GASR), Ser-36, 62-63 (DV), and Asn-89. Position 141 (Ser-141) interacts with substrate. The active-site Proton acceptor is the Tyr-154. NADP(+)-binding positions include 154–158 (YVAAK) and Ile-187.

This sequence belongs to the short-chain dehydrogenases/reductases (SDR) family. In terms of assembly, homotetramer.

It catalyses the reaction a (3R)-hydroxyacyl-[ACP] + NADP(+) = a 3-oxoacyl-[ACP] + NADPH + H(+). Its pathway is lipid metabolism; fatty acid biosynthesis. Its function is as follows. Catalyzes the NADPH-dependent reduction of beta-ketoacyl-ACP substrates to beta-hydroxyacyl-ACP products, the first reductive step in the elongation cycle of fatty acid biosynthesis. The chain is 3-oxoacyl-[acyl-carrier-protein] reductase FabG (fabG) from Bacillus subtilis (strain 168).